Consider the following 185-residue polypeptide: MVSRVLALISVAMLVGARPYVQNVGDVDLNDVDATVGTGVVDTGMSGDLLAGLLANGLLADLLSEDADGHIPEVTGSSTEEATSSSTWSGASSKPTDSAPTQCNSGTLQCCESTTEAKDIDRVLLSTLLGVDVGSITGLIGKNCSPVSVVGVGAGSTCSTQTVCCDGDSFDGLINLGCKSGNVAV.

An N-terminal signal peptide occupies residues 1-17 (MVSRVLALISVAMLVGA). Residues 70–104 (HIPEVTGSSTEEATSSSTWSGASSKPTDSAPTQCN) form a disordered region. A compositionally biased stretch (low complexity) spans 75 to 93 (TGSSTEEATSSSTWSGASS). Polar residues predominate over residues 94 to 104 (KPTDSAPTQCN). Intrachain disulfides connect Cys103/Cys164, Cys110/Cys158, Cys111/Cys144, and Cys165/Cys178.

It belongs to the fungal hydrophobin family. In terms of assembly, self-assembles to form functional amyloid fibrils called rodlets. Self-assembly into fibrillar rodlets occurs spontaneously at hydrophobic:hydrophilic interfaces and the rodlets further associate laterally to form amphipathic monolayers.

It localises to the secreted. Its subcellular location is the cell wall. Functionally, aerial growth, conidiation, and dispersal of filamentous fungi in the environment rely upon a capability of their secreting small amphipathic proteins called hydrophobins (HPBs) with low sequence identity. Class I can self-assemble into an outermost layer of rodlet bundles on aerial cell surfaces, conferring cellular hydrophobicity that supports fungal growth, development and dispersal; whereas Class II form highly ordered films at water-air interfaces through intermolecular interactions but contribute nothing to the rodlet structure. SC6 is a dikaryon-specific class I hydrophobin that contributes to the formation of aerial hyphae and fruiting bodies. The protein is Class I hydrophobin SC6 of Schizophyllum commune (Split gill fungus).